The following is a 306-amino-acid chain: Porphobilinogen deaminase (306 aa).

Cysteine 241 carries the post-translational modification S-(dipyrrolylmethanemethyl)cysteine.

The protein belongs to the HMBS family. In terms of assembly, monomer. Dipyrromethane serves as cofactor.

It carries out the reaction 4 porphobilinogen + H2O = hydroxymethylbilane + 4 NH4(+). The protein operates within porphyrin-containing compound metabolism; protoporphyrin-IX biosynthesis; coproporphyrinogen-III from 5-aminolevulinate: step 2/4. Tetrapolymerization of the monopyrrole PBG into the hydroxymethylbilane pre-uroporphyrinogen in several discrete steps. The polypeptide is Porphobilinogen deaminase (Acidithiobacillus ferrooxidans (strain ATCC 23270 / DSM 14882 / CIP 104768 / NCIMB 8455) (Ferrobacillus ferrooxidans (strain ATCC 23270))).